The following is a 318-amino-acid chain: NADH-ubiquinone oxidoreductase chain 1 (318 aa).

A run of 8 helical transmembrane segments spans residues 2–22 (FMVN…FLTL), 71–91 (YIIA…PLPI), 98–118 (INLG…SILW), 146–166 (LAII…STLI), 171–191 (HTWL…STLA), 222–242 (LFFM…ATIF), 253–273 (EFFS…FLWV), and 294–314 (LPLT…LANI).

Belongs to the complex I subunit 1 family.

The protein resides in the mitochondrion inner membrane. The enzyme catalyses a ubiquinone + NADH + 5 H(+)(in) = a ubiquinol + NAD(+) + 4 H(+)(out). In terms of biological role, core subunit of the mitochondrial membrane respiratory chain NADH dehydrogenase (Complex I) that is believed to belong to the minimal assembly required for catalysis. Complex I functions in the transfer of electrons from NADH to the respiratory chain. The immediate electron acceptor for the enzyme is believed to be ubiquinone. The sequence is that of NADH-ubiquinone oxidoreductase chain 1 (MT-ND1) from Nycticebus coucang (Slow loris).